We begin with the raw amino-acid sequence, 338 residues long: Nuclear hormone receptor family member nhr-108 (338 aa).

A DNA-binding region (nuclear receptor) is located at residues 7–82 (NQPCMVCGEI…IGMLEKVVAS (76 aa)). Residues 10-30 (CMVCGEISYSIRFGAVSCRAC) form an NR C4-type zinc finger. The NR C4-type; degenerate zinc-finger motif lies at 46-65 (KRCNGACDLGKYHRKTCQSC). Positions 92–338 (NNQTILSGLE…QCPLYEATNE (247 aa)) constitute an NR LBD domain.

The protein belongs to the nuclear hormone receptor family.

Its subcellular location is the nucleus. Orphan nuclear receptor. The sequence is that of Nuclear hormone receptor family member nhr-108 (nhr-108) from Caenorhabditis elegans.